Here is a 500-residue protein sequence, read N- to C-terminus: NAD(P)H-quinone oxidoreductase chain 4, chloroplastic (500 aa).

14 helical membrane passes run F4–L24, I37–L57, I87–V107, L113–S130, L134–M154, F167–L187, I207–I227, H242–V262, A272–A292, I305–D325, G330–G350, L386–T406, F411–I431, and L462–L482.

Belongs to the complex I subunit 4 family.

It is found in the plastid. The protein localises to the chloroplast thylakoid membrane. It carries out the reaction a plastoquinone + NADH + (n+1) H(+)(in) = a plastoquinol + NAD(+) + n H(+)(out). It catalyses the reaction a plastoquinone + NADPH + (n+1) H(+)(in) = a plastoquinol + NADP(+) + n H(+)(out). The polypeptide is NAD(P)H-quinone oxidoreductase chain 4, chloroplastic (Carica papaya (Papaya)).